Reading from the N-terminus, the 204-residue chain is Thymidylate kinase (204 aa).

13–20 contacts ATP; sequence GIDGSGKS.

Belongs to the thymidylate kinase family.

The catalysed reaction is dTMP + ATP = dTDP + ADP. Functionally, phosphorylation of dTMP to form dTDP in both de novo and salvage pathways of dTTP synthesis. This is Thymidylate kinase from Leptospira interrogans serogroup Icterohaemorrhagiae serovar copenhageni (strain Fiocruz L1-130).